Consider the following 364-residue polypeptide: MRSSYRVGNPIRFQPTNVVGLLLLSLVLSFMLVQSYELGHASGETNANSKYPLTTPVEENLKVRFKIGVISDDDKNAVSKDESNTWVSTYLTGTLEWEKSTDKITVQWDKGNEKKVKSKYSYGGRGMELSELVTFNGNLLTFDDRTGLVYILKDDKVYPWVVLADGDGKNSKGFKSEWATEKAGNLYVGSSGKEWTTKEGTIENYNPMWVKMINKNGEVTSLNWQTNYEKIRSSMNITFPGYMWHEAACWSDKYNKWFFLPRALSQEAYDSKKFETQGANVIISCDDKFEKCEPTQIQGKTEDKRGFSNFKFVPTSEDKIIVGLKTVEADDTTETYFTAFDLEGKVLLEETKIDDHKYEGVDFV.

The N-terminal stretch at 1–35 (MRSSYRVGNPIRFQPTNVVGLLLLSLVLSFMLVQS) is a signal peptide.

Belongs to the apyrase family. Ca(2+) serves as cofactor. In terms of tissue distribution, salivary gland (at protein level).

It is found in the secreted. It carries out the reaction a ribonucleoside 5'-triphosphate + 2 H2O = a ribonucleoside 5'-phosphate + 2 phosphate + 2 H(+). Facilitates hematophagy by inhibiting ADP-dependent platelet aggregation in the host. Cleaves adenosine triphosphate (ATP) and adenosine diphosphate (ADP) to adenosine monophosphate (AMP) and inorganic phosphate in calcium-dependent manner. This Cimex lectularius (Bed bug) protein is Apyrase.